The chain runs to 416 residues: MAHSPVAVQVPGMQNNIADPEELFTKLERIGKGSFGEVFKGIDNRTQQVVAIKIIDLEEAEDEIEDIQQEITVLSQCDSSYVTKYYGSYLKGSKLWIIMEYLGGGSALDLLRAGPFDEFQIATMLKEILKGLDYLHSEKKIHRDIKAANVLLSEQGDVKLADFGVAGQLTDTQIKRNTFVGTPFWMAPEVIQQSAYDSKADIWSLGITAIELAKGEPPNSDMHPMRVLFLIPKNNPPTLIGDFTKSFKEFIDACLNKDPSFRPTAKELLKHKFIVKNSKKTSYLTELIDRFKRWKAEGHSDEESDSEGSDSESSSRESNPHPEWSFTTVRKKPDPKKLQNGEEQDLVQTLSCLSMIITPAFAELKQQDENNASRNQAIEELEKSIAVAETACPGITDKMVKKLIEKFQKCSADESP.

A2 carries the N-acetylalanine modification. A Phosphoserine modification is found at S4. Residues 24-274 (FTKLERIGKG…AKELLKHKFI (251 aa)) enclose the Protein kinase domain. Residues 30–38 (IGKGSFGEV) and K53 each bind ATP. The Proton acceptor role is filled by D144. Phosphothreonine; by autocatalysis is present on T178. The tract at residues 296 to 343 (AEGHSDEESDSEGSDSESSSRESNPHPEWSFTTVRKKPDPKKLQNGEE) is disordered. A phosphoserine mark is found at S300, S304, S306, S309, and S325. Residues T327 and T328 each carry the phosphothreonine modification. Residues 331–340 (KKPDPKKLQN) are compositionally biased toward basic and acidic residues.

This sequence belongs to the protein kinase superfamily. STE Ser/Thr protein kinase family. STE20 subfamily. In terms of assembly, homodimer. Interacts with PDCD10. Interacts with GOLGA2. Interacts with CTTNBP2NL. Interacts with RIPOR1 (via C-terminus); this interaction occurs in a PDCD10-dependent and Rho-independent manner. Interacts with PDCD10; this interaction is required for the association of STK26 with RIPOR1. Part of the core of STRIPAK complexes composed of PP2A catalytic and scaffolding subunits, the striatins (PP2A regulatory subunits), the striatin-associated proteins MOB4, STRIP1 and STRIP2, PDCD10 and members of the STE20 kinases, such as STK24 and STK26. Requires Mg(2+) as cofactor.

Its subcellular location is the cytoplasm. The protein resides in the golgi apparatus. The enzyme catalyses L-seryl-[protein] + ATP = O-phospho-L-seryl-[protein] + ADP + H(+). It carries out the reaction L-threonyl-[protein] + ATP = O-phospho-L-threonyl-[protein] + ADP + H(+). With respect to regulation, interaction with Golgi matrix protein GOLGA2 leads to autophosphorylation on Thr-178, possibly as a consequence of stabilization of dimer formation. May also be activated by C-terminal cleavage. Its function is as follows. Serine/threonine-protein kinase that acts as a mediator of cell growth. Modulates apoptosis. In association with STK24 negatively regulates Golgi reorientation in polarized cell migration upon RHO activation. Phosphorylates ATG4B at 'Ser-383', thereby increasing autophagic flux. Part of the striatin-interacting phosphatase and kinase (STRIPAK) complexes. STRIPAK complexes have critical roles in protein (de)phosphorylation and are regulators of multiple signaling pathways including Hippo, MAPK, nuclear receptor and cytoskeleton remodeling. Different types of STRIPAK complexes are involved in a variety of biological processes such as cell growth, differentiation, apoptosis, metabolism and immune regulation. The sequence is that of Serine/threonine-protein kinase 26 from Mus musculus (Mouse).